Reading from the N-terminus, the 516-residue chain is Polyprenol-phosphate-mannose--protein mannosyltransferase (516 aa).

9 consecutive transmembrane segments (helical) span residues 113–133 (YNGL…VMLV), 143–163 (STLV…SFVS), 166–186 (TALL…CLMV), 234–254 (WSGL…DAIA), 275–295 (AAYV…APWF), 384–404 (VMLV…GWAL), 413–433 (WRYG…FADI), 437–457 (MYFF…ALIL), and 473–493 (LGLL…AWMY).

The protein belongs to the glycosyltransferase 39 family.

It localises to the cell membrane. Its pathway is protein modification; protein glycosylation. In terms of biological role, protein O-mannosyltransferase that catalyzes the transfer of a single mannose residue from a polyprenol phospho-mannosyl lipidic donor to the hydroxyl group of selected serine and threonine residues in acceptor proteins. The protein is Polyprenol-phosphate-mannose--protein mannosyltransferase of Mycolicibacterium smegmatis (strain ATCC 700084 / mc(2)155) (Mycobacterium smegmatis).